Here is a 425-residue protein sequence, read N- to C-terminus: Monoacylglycerol lipase ABHD2 (425 aa).

Topologically, residues 1 to 9 (MNAMLETPE) are cytoplasmic. Residues 10–30 (LPAVFDGVKLAAVAAVLYVIV) form a helical; Signal-anchor for type II membrane protein membrane-spanning segment. Residues 31–425 (RCLNLKSPTA…DTEQVEADLE (395 aa)) lie on the Extracellular side of the membrane. The AB hydrolase-1 domain maps to 128 to 382 (MVICPGIANH…HGGHLGFFEG (255 aa)). Asparagine 136 is a glycosylation site (N-linked (GlcNAc...) asparagine). Catalysis depends on serine 207, which acts as the Nucleophile. Active-site charge relay system residues include aspartate 345 and histidine 376.

It belongs to the AB hydrolase superfamily. AB hydrolase 4 family. Present in sperm (at protein level).

It is found in the cell projection. The protein resides in the cilium. The protein localises to the flagellum membrane. Its subcellular location is the cell membrane. The enzyme catalyses an acetyl ester + H2O = an aliphatic alcohol + acetate + H(+). The catalysed reaction is Hydrolyzes glycerol monoesters of long-chain fatty acids.. It carries out the reaction a triacylglycerol + H2O = a diacylglycerol + a fatty acid + H(+). It catalyses the reaction 2-(5Z,8Z,11Z,14Z-eicosatetraenoyl)-glycerol + H2O = glycerol + (5Z,8Z,11Z,14Z)-eicosatetraenoate + H(+). The enzyme catalyses a butanoate ester + H2O = an aliphatic alcohol + butanoate + H(+). The catalysed reaction is hexadecanoate ester + H2O = an aliphatic alcohol + hexadecanoate + H(+). With respect to regulation, acylglycerol lipase activity is activated upon binding to progesterone. Progesterone-dependent acylglycerol lipase that catalyzes hydrolysis of endocannabinoid arachidonoylglycerol (AG) from cell membrane. Acts as a progesterone receptor: progesterone-binding activates the acylglycerol lipase activity, mediating degradation of 1-arachidonoylglycerol (1AG) and 2-arachidonoylglycerol (2AG) to glycerol and arachidonic acid (AA). Also displays an ester hydrolase activity against acetyl ester, butanoate ester and hexadecanoate ester. Plays a key role in sperm capacitation in response to progesterone by mediating degradation of 2AG, an inhibitor of the sperm calcium channel CatSper, leading to calcium influx via CatSper and sperm activation. May also play a role in smooth muscle cells migration. This Homo sapiens (Human) protein is Monoacylglycerol lipase ABHD2.